The chain runs to 353 residues: Beta-hexosaminidase (353 aa).

Substrate is bound by residues aspartate 74, arginine 82, arginine 149, and lysine 179–histidine 180. Histidine 192 functions as the Proton donor/acceptor in the catalytic mechanism. Aspartate 263 (nucleophile) is an active-site residue.

Belongs to the glycosyl hydrolase 3 family. NagZ subfamily.

The protein resides in the cytoplasm. The enzyme catalyses Hydrolysis of terminal non-reducing N-acetyl-D-hexosamine residues in N-acetyl-beta-D-hexosaminides.. Its pathway is cell wall biogenesis; peptidoglycan recycling. Plays a role in peptidoglycan recycling by cleaving the terminal beta-1,4-linked N-acetylglucosamine (GlcNAc) from peptide-linked peptidoglycan fragments, giving rise to free GlcNAc, anhydro-N-acetylmuramic acid and anhydro-N-acetylmuramic acid-linked peptides. This is Beta-hexosaminidase from Bordetella bronchiseptica (strain ATCC BAA-588 / NCTC 13252 / RB50) (Alcaligenes bronchisepticus).